Reading from the N-terminus, the 101-residue chain is Histone H1-like protein EM6 (101 aa).

2 stretches are compositionally biased toward basic residues: residues 1–35 and 58–101; these read AKKRSRSRKRSASRKRSRSRKRSASKKSSKKHVRK and AKKK…RRRR. A disordered region spans residues 1–101; sequence AKKRSRSRKR…SRTARSRRRR (101 aa). 4 tandem repeats follow at residues 3-4, 5-6, 7-8, and 9-10. The tract at residues 3-22 is 10 X 2 AA approximate tandem repeats of [SK]-R; it reads KRSRSRKRSASRKRSRSRKR. Residues 11–12 form a 5; approximate repeat; the sequence is SA. A run of 5 repeats spans residues 13–14, 15–16, 17–18, 19–20, and 21–22. Positions 32-65 are globular; it reads HVRKALAAGMKNHLLAHPKGSNNFILAKKKAPRR.

As to expression, sperm.

The protein localises to the nucleus. The protein resides in the chromosome. The protein is Histone H1-like protein EM6 of Ensis minor (Razor shell).